The following is a 116-amino-acid chain: Protein Wnt-5b (116 aa).

Serine 1 carries O-palmitoleoyl serine; by PORCN lipidation. N-linked (GlcNAc...) asparagine glycosylation is found at asparagine 69 and asparagine 83. The cysteines at positions 82 and 97 are disulfide-linked.

It belongs to the Wnt family. In terms of processing, palmitoleoylation is required for efficient binding to frizzled receptors. Depalmitoleoylation leads to Wnt signaling pathway inhibition.

The protein localises to the secreted. The protein resides in the extracellular space. Its subcellular location is the extracellular matrix. Functionally, ligand for members of the frizzled family of seven transmembrane receptors. Probable developmental protein. May be a signaling molecule which affects the development of discrete regions of tissues. Is likely to signal over only few cell diameters. The protein is Protein Wnt-5b (WNT-5B) of Plethodon jordani (Red-cheeked salamander).